The primary structure comprises 174 residues: Adenylate kinase (174 aa).

Positions 12–41 (STGDMLRAAIKAGTLLGLEAKKIIDEGGLV) are NMP. Residues Thr-13, Arg-18, 39-41 (GLV), 67-70 (GFPR), and Gln-74 each bind AMP. Positions 104-141 (GRRVHLASGRTYHVTYNPPKVEGKDDVTGEDLIQRDDD) are LID. ATP is bound by residues Arg-105 and 114–115 (TY). AMP is bound by residues Arg-138 and Arg-149.

It belongs to the adenylate kinase family. As to quaternary structure, monomer.

Its subcellular location is the cytoplasm. The catalysed reaction is AMP + ATP = 2 ADP. It participates in purine metabolism; AMP biosynthesis via salvage pathway; AMP from ADP: step 1/1. Functionally, catalyzes the reversible transfer of the terminal phosphate group between ATP and AMP. Plays an important role in cellular energy homeostasis and in adenine nucleotide metabolism. The chain is Adenylate kinase from Neisseria polysaccharea.